The sequence spans 151 residues: Arginine repressor (151 aa).

It belongs to the ArgR family.

The protein resides in the cytoplasm. It functions in the pathway amino-acid biosynthesis; L-arginine biosynthesis [regulation]. Regulates arginine biosynthesis genes. In Moorella thermoacetica (strain ATCC 39073 / JCM 9320), this protein is Arginine repressor.